A 989-amino-acid polypeptide reads, in one-letter code: Autotransporter adhesin/invasin TibA (989 aa).

A signal peptide spans 1–54 (MNKVYNTVWNESTGTWVVTSELTRKGGLRPRQIKRTVLAGLIAGLLMPSMPALA). Residues Ser74, Ser86, Ser93, Ser94, Ser97, Ser100, Ser112, Ser113, Ser116, Ser119, Ser124, Ser131, Ser132, and Ser135 are each glycosylated (O-alpha-linked (D-glycero-D-manno-heptose) serine). Tandem repeats lie at residues 82-100 (TTIN…SATS), 101-119 (TTIN…SATS), 120-138 (STIN…SATN), 139-157 (TTVN…SAMG), 158-176 (TIIN…SATS), 177-195 (ASVT…IVKA), 196-214 (TSVN…SATD), 215-233 (TVLN…SAAK), 234-251 (TTIN…SATG), 252-270 (TSIY…SATN), 271-289 (TTVY…NVTE), and 290-308 (TTIT…SASK). The interval 82–308 (TTINSGGKQY…QVEAGGSASK (227 aa)) is 12 X 19 AA approximate repeats. A compositionally biased stretch (polar residues) spans 110 to 123 (HVSSGGSATSSTIN). A disordered region spans residues 110–146 (HVSSGGSATSSTINSGGHQHVSSGGSATNTTVNNGGR). Residues 124 to 135 (SGGHQHVSSGGS) show a composition bias toward low complexity. Residues 136–146 (ATNTTVNNGGR) show a composition bias toward polar residues. Ser151, Ser154, Ser162, Ser170, Ser176, Ser181, Ser188, Ser189, Ser200, Ser226, Ser227, Ser230, Ser238, Ser248, Ser263, Ser264, Ser275, Ser294, Ser305, Ser313, and Ser322 each carry an O-alpha-linked (D-glycero-D-manno-heptose) serine glycan. The interval 623 to 686 (WYLKADTPPP…GTSSSPVRRT (64 aa)) is disordered. Positions 629–638 (TPPPVTPPTN) are enriched in pro residues. A run of 8 repeats spans residues 639–643 (PDADN), 644–648 (PDAGN), 649–653 (PDAGN), 654–658 (PDAGN), 659–663 (PDAGN), 664–668 (PDAGK), 669–673 (PGTGK), and 674–678 (PDAGT). Residues 639 to 667 (PDADNPDAGNPDAGNPDAGNPDAGNPDAG) are compositionally biased toward low complexity. An 8 X 5 AA repeats of P-[DG]-[AGT]-[DGA]-[NKT] region spans residues 639–678 (PDADNPDAGNPDAGNPDAGNPDAGNPDAGKPGTGKPDAGT). The Autotransporter domain maps to 721 to 989 (NTRAPGGVWG…TGGVGFRINF (269 aa)).

As to quaternary structure, homohexamer. Post-translationally, glycosylated by TibC. Glycosylation is required for adhesion to and invasion of host cells. Glycosylation is dispensable for bacterial autoaggregation and biofilm formation.

It localises to the cell outer membrane. Functionally, mediates both adhesion to and invasion of human intestine epithelial cells. Also mediates bacterial cell aggregation via intercellular TibA-TibA interaction. Enhances biofilm formation. This is Autotransporter adhesin/invasin TibA from Escherichia coli O78:H11 (strain H10407 / ETEC).